A 246-amino-acid chain; its full sequence is ATP synthase subunit a (246 aa).

Residues 1–3 (MFY) constitute a propeptide, removed in mature form. 7 helical membrane-spanning segments follow: residues 20 to 40 (ILTL…SIIF), 56 to 76 (WGVA…SQIG), 82 to 102 (FFPL…ISMI), 112 to 132 (LVAI…LGLY), 138 to 158 (FFAL…LVLI), 176 to 196 (ANIL…VNLM), and 203 to 223 (FIGG…EVGI).

This sequence belongs to the ATPase A chain family. In terms of assembly, F-type ATPases have 2 components, CF(1) - the catalytic core - and CF(0) - the membrane proton channel. CF(1) has five subunits: alpha(3), beta(3), gamma(1), delta(1), epsilon(1). CF(0) has three main subunits: a, b and c.

It localises to the mitochondrion inner membrane. Mitochondrial membrane ATP synthase (F(1)F(0) ATP synthase or Complex V) produces ATP from ADP in the presence of a proton gradient across the membrane which is generated by electron transport complexes of the respiratory chain. F-type ATPases consist of two structural domains, F(1) - containing the extramembraneous catalytic core and F(0) - containing the membrane proton channel, linked together by a central stalk and a peripheral stalk. During catalysis, ATP synthesis in the catalytic domain of F(1) is coupled via a rotary mechanism of the central stalk subunits to proton translocation. Key component of the proton channel; it may play a direct role in the translocation of protons across the membrane. The chain is ATP synthase subunit a (ATP6) from Candida albicans (strain SC5314 / ATCC MYA-2876) (Yeast).